Consider the following 121-residue polypeptide: Snaclec coagulation factor IX-binding protein subunit A (121 aa).

Positions 1–120 constitute a C-type lectin domain; it reads YEGHCYQTFK…CGERNPFVCE (120 aa). Disulfide bonds link cysteine 22/cysteine 119 and cysteine 94/cysteine 111. Ca(2+)-binding residues include serine 33, glutamate 35, and glutamate 39. Glutamate 120 contributes to the Ca(2+) binding site.

Belongs to the snaclec family. In terms of assembly, heterodimer of subunits A and B; disulfide-linked. In terms of tissue distribution, expressed by the venom gland.

It is found in the secreted. Anticoagulant protein which binds to the gamma-carboxyglutamic acid-domain regions of factor IX (F9) (but not factor X) in the presence of calcium with a 1 to 1 stoichiometry. The polypeptide is Snaclec coagulation factor IX-binding protein subunit A (Gloydius halys (Chinese water mocassin)).